A 177-amino-acid chain; its full sequence is O-acetyl-ADP-ribose deacetylase (177 aa).

Residues 1-175 (MKTRIHVVQG…LYERLLTQQG (175 aa)) enclose the Macro domain. Residues 11 to 12 (DI), N25, 33 to 35 (GVD), and 122 to 126 (STGVY) each bind substrate. Catalysis depends on D35, which acts as the Proton acceptor.

The protein belongs to the MacroD-type family. YmdB subfamily. As to quaternary structure, homodimer. Interacts with RNase III.

It catalyses the reaction 3''-O-acetyl-ADP-D-ribose + H2O = ADP-D-ribose + acetate + H(+). It carries out the reaction 2''-O-acetyl-ADP-D-ribose + H2O = ADP-D-ribose + acetate + H(+). Deacetylates O-acetyl-ADP ribose to yield ADP-ribose and free acetate. Down-regulates ribonuclease 3 (RNase III) activity. Acts by interacting directly with the region of the ribonuclease that is required for dimerization/activation. This is O-acetyl-ADP-ribose deacetylase from Shigella flexneri serotype 5b (strain 8401).